Here is a 239-residue protein sequence, read N- to C-terminus: LexA repressor (239 aa).

The H-T-H motif DNA-binding region spans 26 to 46 (FDEMKEALDLASKSGIHRLIT). The segment at 90–110 (GSLGKTPPPPARPAPVATNDD) is disordered. Residues Ser160 and Lys198 each act as for autocatalytic cleavage activity in the active site.

This sequence belongs to the peptidase S24 family. Homodimer.

It catalyses the reaction Hydrolysis of Ala-|-Gly bond in repressor LexA.. Functionally, represses a number of genes involved in the response to DNA damage (SOS response), including recA and lexA. In the presence of single-stranded DNA, RecA interacts with LexA causing an autocatalytic cleavage which disrupts the DNA-binding part of LexA, leading to derepression of the SOS regulon and eventually DNA repair. In Brucella anthropi (strain ATCC 49188 / DSM 6882 / CCUG 24695 / JCM 21032 / LMG 3331 / NBRC 15819 / NCTC 12168 / Alc 37) (Ochrobactrum anthropi), this protein is LexA repressor.